Reading from the N-terminus, the 435-residue chain is MIKEKLTIIGAGLAGCEAAWQAAGRGVAVTLHEMKPEKYSPAHHLPGLAELVCSNSLRGESLENAVGLLKEELRRLGSLFMEAALATRVPAGGALAVDRGLFSAFITDKIENHPLIEVVHGEVAEIPADGTVIVASGPLTSDALAASIGKYTGDYLYFYDAIAPIVTSDSIDLSKAFRASRYGKGDGDDYLNCPLDEAEYKAFIAALLAAEKVAAKEFEKVVHFEGCMPIEEMAERGLDTLRFGPMKPVGLIDPRTGIEPHAVVQLRQENREGTLFNLVGFQTKLTYPEQQRIFRTIPGLGKAEFVRLGSMHRNTFINAPQLLLSTFQLKREPRILFAGQITGVEGYVESAASGFLAGLNGARLAKGEALIVPPSVTALGALVNHITSAPAKHFQPMNINYGLFPDLAGRVKKKEKRAKLAERALTELDGWMNTL.

FAD is bound at residue 10–15 (GAGLAG).

The protein belongs to the MnmG family. TrmFO subfamily. Requires FAD as cofactor.

The protein localises to the cytoplasm. The enzyme catalyses uridine(54) in tRNA + (6R)-5,10-methylene-5,6,7,8-tetrahydrofolate + NADH + H(+) = 5-methyluridine(54) in tRNA + (6S)-5,6,7,8-tetrahydrofolate + NAD(+). The catalysed reaction is uridine(54) in tRNA + (6R)-5,10-methylene-5,6,7,8-tetrahydrofolate + NADPH + H(+) = 5-methyluridine(54) in tRNA + (6S)-5,6,7,8-tetrahydrofolate + NADP(+). In terms of biological role, catalyzes the folate-dependent formation of 5-methyl-uridine at position 54 (M-5-U54) in all tRNAs. In Geotalea uraniireducens (strain Rf4) (Geobacter uraniireducens), this protein is Methylenetetrahydrofolate--tRNA-(uracil-5-)-methyltransferase TrmFO.